A 585-amino-acid polypeptide reads, in one-letter code: uncharacterized protein (585 aa).

The disordered stretch occupies residues 27 to 59 (DDSERSVKSVSVSISDDEDSKTDVQDNMATPST).

This is an uncharacterized protein from Saccharomyces cerevisiae (strain ATCC 204508 / S288c) (Baker's yeast).